The following is a 367-amino-acid chain: MFPQRSSELYRTPVTHQPPPALELAGNLEYPNLNIADLNARLENLSPRLHDCWDSIAINDHNHLALATNRREGRQWWGMLFGYGRDQMHHMSVDSANFKLQAEHTVNIVRYAEDDFLLVALGDTRLQAWSTYSKVRDSQSPYCLFLVGESSAHPTPISQLSVFKADPRTAVSGSADSTLNVWDLSGADMVSTYRSRSSHTDKLTGLATPAASVDKFVTCDRGGCARLWDVRAAAPSSTCLYADASHVLSFTSAAWAAASELQGDNHIYLGDYDGKVHTLDIRVPRKLAETREYFDKGHVAQLLINGPHLAAMSNLPASVKVANVQAGHEFIYTHQDTHSRLTDAVWTDDSTLITIGHGRKMVTHAIK.

WD repeat units follow at residues 101 to 139 (QAEHTVNIVRYAEDDFLLVALGDTRLQAWSTYSKVRDSQ), 152 to 192 (AHPT…MVST), and 198 to 238 (SHTD…PSST). Residues 309–367 (LAAMSNLPASVKVANVQAGHEFIYTHQDTHSRLTDAVWTDDSTLITIGHGRKMVTHAIK) form an interaction with csul region.

As to quaternary structure, interacts with csul and tud. In oocytes, localizes to pole plasm and nuage (at protein level). Expressed stronger in the germline than in somatic cells. In the germarium it sometimes concentrates in perinuclear aggregates that disappear by stage 2 of oogenesis. At later stages, it is uniformly distributed in the nurse cells and oocyte, as well as in young embryos, with no particular enrichment at the posterior or inside the pole cells (at protein level).

Its subcellular location is the cytoplasm. Its function is as follows. Involved in specific localization of cytoplasmic proteins during the formation of pole plasm. Required for synthesis and/or stability of oskar protein (osk) and localization of tudor (tud) in both the nuage and posterior pole of the oocyte. Required for normal posterior localization of osk in later stages of oogenesis and for posterior localization of the vasa (vas) protein during the entire process of pole plasm assembly. May act by regulating the complex that contains the arginine N-methyltransferase csul. The chain is Protein valois (vls) from Drosophila melanogaster (Fruit fly).